A 458-amino-acid chain; its full sequence is Tubulin beta chain (458 aa).

GTP contacts are provided by Q11, E69, S138, G142, T143, G144, N204, and N226. Residue E69 participates in Mg(2+) binding. Residues 426 to 458 form a disordered region; that stretch reads EAATVEGEEEEDEYAEGGVVNGDQSYDEPYQAA. Acidic residues predominate over residues 431 to 440; it reads EGEEEEDEYA.

This sequence belongs to the tubulin family. In terms of assembly, dimer of alpha and beta chains. A typical microtubule is a hollow water-filled tube with an outer diameter of 25 nm and an inner diameter of 15 nM. Alpha-beta heterodimers associate head-to-tail to form protofilaments running lengthwise along the microtubule wall with the beta-tubulin subunit facing the microtubule plus end conferring a structural polarity. Microtubules usually have 13 protofilaments but different protofilament numbers can be found in some organisms and specialized cells. The cofactor is Mg(2+).

The protein localises to the cytoplasm. The protein resides in the cytoskeleton. Tubulin is the major constituent of microtubules, a cylinder consisting of laterally associated linear protofilaments composed of alpha- and beta-tubulin heterodimers. Microtubules grow by the addition of GTP-tubulin dimers to the microtubule end, where a stabilizing cap forms. Below the cap, tubulin dimers are in GDP-bound state, owing to GTPase activity of alpha-tubulin. The protein is Tubulin beta chain (TUBB1) of Pyropia yezoensis (Susabi-nori).